A 160-amino-acid polypeptide reads, in one-letter code: Calcium and integrin-binding family member 3 (160 aa).

EF-hand domains are found at residues 39–74 (KDNP…MSEM), 76–111 (PRDL…LTRG), and 117–152 (EVTL…APDF). 10 residues coordinate Ca(2+): aspartate 89, asparagine 91, aspartate 93, tyrosine 95, aspartate 100, aspartate 130, aspartate 132, aspartate 134, arginine 136, and aspartate 141.

In terms of assembly, monomer and homodimer. Interacts with ITGA2B (via C-terminus cytoplasmic tail region); the interaction is stabilized/increased in a calcium and magnesium-dependent manner. Interacts with TMC1. In terms of tissue distribution, expressed in heart, liver and inner ear. In the inner ear, expressed in vestibule and basilar membrane cells. Expressed in megakaryocytes and endothelial cells.

Functionally, acts as an auxiliary subunit of the sensory mechanoelectrical transduction (MET) channel in hair cells. Plays a role in regulating hair cell MET channel localization and function. The chain is Calcium and integrin-binding family member 3 (Cib3) from Mus musculus (Mouse).